The primary structure comprises 166 residues: Small ribosomal subunit protein uS9 (166 aa).

The tract at residues lysine 135–arginine 166 is disordered. Over residues arginine 142–lysine 151 the composition is skewed to basic and acidic residues. Residues tyrosine 152–arginine 166 show a composition bias toward basic residues.

Belongs to the universal ribosomal protein uS9 family.

This is Small ribosomal subunit protein uS9 from Mycolicibacterium paratuberculosis (strain ATCC BAA-968 / K-10) (Mycobacterium paratuberculosis).